The following is a 696-amino-acid chain: Rho-related BTB domain-containing protein 1 (696 aa).

The segment at 1–210 (MDADMDYERP…DNAIRAALIS (210 aa)) is rho-like. Residues 21-28 (GDNAVGKT), 84-88 (DTFGD), and 140-143 (CQLD) contribute to the GTP site. 2 BTB domains span residues 266 to 427 (ADVL…DEKE) and 485 to 552 (SDVT…SPNL). The interval 327 to 348 (VDPEEEREEGPPRIPQADQWKS) is disordered.

It belongs to the small GTPase superfamily. Rho family. Ubiquitous, with highest levels in skeletal muscle, placenta, testis, stomach, and kidney, followed by uterus and adrenal gland. Expressed in a variety of fetal tissues.

The protein is Rho-related BTB domain-containing protein 1 (RHOBTB1) of Homo sapiens (Human).